We begin with the raw amino-acid sequence, 1438 residues long: DNA polymerase III PolC-type (1438 aa).

Positions 422–578 constitute an Exonuclease domain; the sequence is YVVFDVETTG…YDTESTAYIF (157 aa).

It belongs to the DNA polymerase type-C family. PolC subfamily.

The protein resides in the cytoplasm. It catalyses the reaction DNA(n) + a 2'-deoxyribonucleoside 5'-triphosphate = DNA(n+1) + diphosphate. Functionally, required for replicative DNA synthesis. This DNA polymerase also exhibits 3' to 5' exonuclease activity. The chain is DNA polymerase III PolC-type from Staphylococcus haemolyticus (strain JCSC1435).